The chain runs to 461 residues: Phenolic glucoside malonyltransferase 1 (461 aa).

H167 (proton acceptor) is an active-site residue. An HXXXD motif motif is present at residues 167–171 (HAAQD). Residue 281–282 (ST) participates in malonyl-CoA binding. Residue D400 is the Proton acceptor of the active site. A DFGWG motif motif is present at residues 400-404 (DFGWG).

This sequence belongs to the plant acyltransferase family. Phenolic glucoside malonyltransferase subfamily. As to expression, expressed in all tissues. Most highly expressed in the abdomen and especially in the gut.

The catalysed reaction is a flavonol 3-O-beta-D-glucoside + malonyl-CoA = a flavonol 3-O-(6-O-malonyl-beta-D-glucoside) + CoA. It carries out the reaction kaempferol 3-O-beta-D-glucoside + malonyl-CoA = kaempferol 3-O-(6-O-malonyl-beta-D-glucoside) + CoA. The enzyme catalyses quercetin 3-O-beta-D-glucoside + malonyl-CoA = quercetin 3-O-(6-O-malonyl-beta-D-glucoside) + CoA. It catalyses the reaction a flavonol 7-O-beta-D-glucoside + malonyl-CoA = a flavonol 7-O-(6-O-malonyl-beta-D-glucoside) + CoA. The catalysed reaction is (2S)-naringenin 7-O-beta-D-glucoside + malonyl-CoA = (2S)-naringenin 7-O-(6-O-malonyl-beta-D-glucoside) + CoA. It carries out the reaction kaempferol 7-O-beta-D-glucoside + malonyl-CoA = kaempferol 7-O-(6-O-malonyl-beta-D-glucoside) + CoA. The enzyme catalyses apigenin 7-O-beta-D-glucoside + malonyl-CoA = apigenin 7-O-(6-O-malonyl-beta-D-glucoside) + CoA. It catalyses the reaction rhaponticin + malonyl-CoA = 6-O-malonyl-rhaponticin + CoA. Functionally, phenolic glucoside malonyltransferase that neutralizes phenolic glycosides in host plants. Catalyzes the transfer of a malonyl group from malonyl-CoA to the phenolic glycosides, leading to their detoxification. Phenolic glycosides, which are among the most abundant plant secondary metabolites, act as plant defense compounds: they strongly affect growth, development and behavior of insect herbivores. Has malonyltransferase activity against flavonoids kaempferol 3-O-glucoside, kaempferol 7-O-glucoside, isoquercetin (quercetin 3-O-beta-D-glucopyranoside), apigetrin (apigenin 7-O-beta-D-glucoside) and prunin (naringenin 7-O-beta-D-glucoside). Also has activity toward non-flavonoid rhaponticin, but with lower efficiency. This is Phenolic glucoside malonyltransferase 1 from Bemisia tabaci (Sweetpotato whitefly).